Reading from the N-terminus, the 337-residue chain is Glyceraldehyde-3-phosphate dehydrogenase (337 aa).

Residues Arg-12–Ile-13, Asp-34, and Arg-79 each bind NAD(+). D-glyceraldehyde 3-phosphate-binding positions include Ser-150–Thr-152, Thr-181, Thr-210–Gly-211, and Arg-233. The active-site Nucleophile is Cys-151. Asn-315 contributes to the NAD(+) binding site.

This sequence belongs to the glyceraldehyde-3-phosphate dehydrogenase family. Homotetramer.

It is found in the cytoplasm. It carries out the reaction D-glyceraldehyde 3-phosphate + phosphate + NAD(+) = (2R)-3-phospho-glyceroyl phosphate + NADH + H(+). It participates in carbohydrate degradation; glycolysis; pyruvate from D-glyceraldehyde 3-phosphate: step 1/5. The chain is Glyceraldehyde-3-phosphate dehydrogenase (GPD) from Coccidioides immitis (strain RS) (Valley fever fungus).